We begin with the raw amino-acid sequence, 96 residues long: MSRVCELTGKGPMTGNNVSHANNKTKRRFLPNLSDVTLGSDLLDRRFKFRISNAALRTVDHRGGLDAFMAKAKDDELSTRALKIKKEIVKAQAAQA.

Residues 1-21 form a disordered region; sequence MSRVCELTGKGPMTGNNVSHA.

Belongs to the bacterial ribosomal protein bL28 family.

This Jannaschia sp. (strain CCS1) protein is Large ribosomal subunit protein bL28.